A 69-amino-acid chain; its full sequence is Protein SlyX homolog (69 aa).

Belongs to the SlyX family.

The polypeptide is Protein SlyX homolog (Pseudomonas aeruginosa (strain LESB58)).